A 217-amino-acid chain; its full sequence is Probable lipoprotein CPn_0875/CP_0994/CPj0875/CpB0904 (217 aa).

An N-terminal signal peptide occupies residues 1–21 (MKRVIYKTIFCGLTLLTSLSS). Cys-22 carries the N-palmitoyl cysteine lipid modification. Cys-22 carries the S-diacylglycerol cysteine lipid modification.

This sequence belongs to the chlamydial CPn_0875/CT_734/TC_0107 family.

It is found in the cell membrane. The sequence is that of Probable lipoprotein CPn_0875/CP_0994/CPj0875/CpB0904 from Chlamydia pneumoniae (Chlamydophila pneumoniae).